The primary structure comprises 476 residues: H2.0-like homeobox protein (476 aa).

Disordered stretches follow at residues 121 to 170, 328 to 401, and 413 to 476; these read HLPQ…SSKD, WRHS…HQTT, and TASS…LAGL. Positions 158 to 168 are enriched in low complexity; the sequence is HHSGSAPAPSS. A DNA-binding region (homeobox) is located at residues 273 to 332; that stretch reads RSWSRAVFSNLQRKGLEKRFEIQKYVTKPDRKQLAAMLGLTDAQVKVWFQNRRMKWRHSK. Basic and acidic residues-rich tracts occupy residues 331–346 and 355–368; these read SKEAQAQKDKDKEAGE and EGEREERSPSRSEG. Acidic residues predominate over residues 369–379; sequence EAESESSDSES. Over residues 386 to 397 the composition is skewed to basic and acidic residues; sequence DTERTEGTERSL. The segment covering 413–446 has biased composition (low complexity); it reads TASSSASGSSFSFSSSSSLGSSNGSAGSASSLGS. Positions 455-464 are enriched in polar residues; the sequence is HQPSVTSGPQ.

The protein belongs to the H2.0 homeobox family.

It localises to the nucleus. In terms of biological role, transcription factor required for TBX21/T-bet-dependent maturation of Th1 cells as well as maintenance of Th1-specific gene expression. Involved in embryogenesis and hematopoiesis. The sequence is that of H2.0-like homeobox protein (Hlx) from Rattus norvegicus (Rat).